Here is a 473-residue protein sequence, read N- to C-terminus: ATP synthase subunit beta, chloroplastic (473 aa).

172-179 (GGAGVGKT) serves as a coordination point for ATP.

The protein belongs to the ATPase alpha/beta chains family. As to quaternary structure, F-type ATPases have 2 components, CF(1) - the catalytic core - and CF(0) - the membrane proton channel. CF(1) has five subunits: alpha(3), beta(3), gamma(1), delta(1), epsilon(1). CF(0) has four main subunits: a(1), b(1), b'(1) and c(9-12).

The protein resides in the plastid. It is found in the chloroplast thylakoid membrane. The catalysed reaction is ATP + H2O + 4 H(+)(in) = ADP + phosphate + 5 H(+)(out). Produces ATP from ADP in the presence of a proton gradient across the membrane. The catalytic sites are hosted primarily by the beta subunits. This chain is ATP synthase subunit beta, chloroplastic, found in Pteridium esculentum (Bracken fern).